Reading from the N-terminus, the 270-residue chain is Malonyl-[acyl-carrier protein] O-methyltransferase (270 aa).

The protein belongs to the methyltransferase superfamily.

It catalyses the reaction malonyl-[ACP] + S-adenosyl-L-methionine = malonyl-[ACP] methyl ester + S-adenosyl-L-homocysteine. It functions in the pathway cofactor biosynthesis; biotin biosynthesis. Converts the free carboxyl group of a malonyl-thioester to its methyl ester by transfer of a methyl group from S-adenosyl-L-methionine (SAM). It allows to synthesize pimeloyl-ACP via the fatty acid synthetic pathway. The sequence is that of Malonyl-[acyl-carrier protein] O-methyltransferase from Magnetococcus marinus (strain ATCC BAA-1437 / JCM 17883 / MC-1).